The sequence spans 375 residues: Peptidyl-prolyl cis-trans isomerase D (375 aa).

A PPIase cyclophilin-type domain is found at 7 to 169 (YFDITIANEP…QAVTISSAGV (163 aa)). TPR repeat units lie at residues 217–250 (AGKL…LDVH), 270–307 (LPLL…PNLS), and 312–345 (GKAL…VPGD).

The protein belongs to the cyclophilin-type PPIase family. PPIase D subfamily.

Its subcellular location is the cytoplasm. It carries out the reaction [protein]-peptidylproline (omega=180) = [protein]-peptidylproline (omega=0). Functionally, PPIases accelerate the folding of proteins. It catalyzes the cis-trans isomerization of proline imidic peptide bonds in oligopeptides. This Cryptococcus neoformans var. neoformans serotype D (strain JEC21 / ATCC MYA-565) (Filobasidiella neoformans) protein is Peptidyl-prolyl cis-trans isomerase D (CPR6).